A 387-amino-acid polypeptide reads, in one-letter code: Testis-expressed protein 9 (387 aa).

2 disordered regions span residues 1–25 and 58–133; these read MAGR…LAAG and REQQ…LKYP. Polar residues-rich tracts occupy residues 70–91 and 103–115; these read ALTT…SSEG and KNTG…QNRL. The stretch at 184 to 347 forms a coiled coil; that stretch reads IGTEAQIRFL…ERQKGELMIG (164 aa).

In terms of tissue distribution, testis-specific.

Its subcellular location is the cytoplasm. The protein localises to the cytoskeleton. It localises to the microtubule organizing center. It is found in the centrosome. The protein resides in the centriolar satellite. This chain is Testis-expressed protein 9 (Tex9), found in Mus musculus (Mouse).